A 488-amino-acid chain; its full sequence is uncharacterized protein (488 aa).

Its subcellular location is the cytoplasm. It is found in the nucleus. This is an uncharacterized protein from Schizosaccharomyces pombe (strain 972 / ATCC 24843) (Fission yeast).